Reading from the N-terminus, the 224-residue chain is Elongation factor 1-beta (224 aa).

The protein belongs to the EF-1-beta/EF-1-delta family. EF-1 is composed of 4 subunits: alpha, beta (1B-alpha=beta'), delta (1B-beta), and gamma (1B-gamma).

In terms of biological role, EF-1-beta and EF-1-beta' stimulate the exchange of GDP bound to EF-1-alpha to GTP. This chain is Elongation factor 1-beta, found in Oryza sativa subsp. japonica (Rice).